The primary structure comprises 202 residues: Small ribosomal subunit protein uS4 (202 aa).

The segment at 16–42 (GELPGLSRKNPRRAYPPGQHGQARKKR) is disordered. The S4 RNA-binding domain occupies 90–151 (MRLDNTVFRL…QERSRRLVEA (62 aa)).

It belongs to the universal ribosomal protein uS4 family. As to quaternary structure, part of the 30S ribosomal subunit. Contacts protein S5. The interaction surface between S4 and S5 is involved in control of translational fidelity.

One of the primary rRNA binding proteins, it binds directly to 16S rRNA where it nucleates assembly of the body of the 30S subunit. Functionally, with S5 and S12 plays an important role in translational accuracy. The protein is Small ribosomal subunit protein uS4 of Rippkaea orientalis (strain PCC 8801 / RF-1) (Cyanothece sp. (strain PCC 8801)).